The primary structure comprises 429 residues: Serine--tRNA ligase (429 aa).

Residue 236 to 238 (TAE) participates in L-serine binding. 267–269 (RSE) lines the ATP pocket. Glu-290 is an L-serine binding site. An ATP-binding site is contributed by 354-357 (EVSS). Ser-390 serves as a coordination point for L-serine.

Belongs to the class-II aminoacyl-tRNA synthetase family. Type-1 seryl-tRNA synthetase subfamily. As to quaternary structure, homodimer. The tRNA molecule binds across the dimer.

The protein localises to the cytoplasm. It catalyses the reaction tRNA(Ser) + L-serine + ATP = L-seryl-tRNA(Ser) + AMP + diphosphate + H(+). It carries out the reaction tRNA(Sec) + L-serine + ATP = L-seryl-tRNA(Sec) + AMP + diphosphate + H(+). Its pathway is aminoacyl-tRNA biosynthesis; selenocysteinyl-tRNA(Sec) biosynthesis; L-seryl-tRNA(Sec) from L-serine and tRNA(Sec): step 1/1. Functionally, catalyzes the attachment of serine to tRNA(Ser). Is also able to aminoacylate tRNA(Sec) with serine, to form the misacylated tRNA L-seryl-tRNA(Sec), which will be further converted into selenocysteinyl-tRNA(Sec). The chain is Serine--tRNA ligase from Wigglesworthia glossinidia brevipalpis.